Consider the following 75-residue polypeptide: MAYRRRKKKIKKCRLCEMKLDYVDYKDTRLLSEFLTDKGKIIPKRLTGNCSKHQRMVKVAIKRARQMGLLPYLKI.

It belongs to the bacterial ribosomal protein bS18 family. As to quaternary structure, part of the 30S ribosomal subunit. Forms a tight heterodimer with protein bS6.

In terms of biological role, binds as a heterodimer with protein bS6 to the central domain of the 16S rRNA, where it helps stabilize the platform of the 30S subunit. The chain is Small ribosomal subunit protein bS18 from Thermotoga maritima (strain ATCC 43589 / DSM 3109 / JCM 10099 / NBRC 100826 / MSB8).